A 325-amino-acid chain; its full sequence is Lipoyl synthase (325 aa).

Residues 1 to 32 are disordered; the sequence is MPPLADASTETLSPAEQAAVRHPEKAHRPDQP. Over residues 19 to 32 the composition is skewed to basic and acidic residues; the sequence is AVRHPEKAHRPDQP. The [4Fe-4S] cluster site is built by Cys-66, Cys-71, Cys-77, Cys-92, Cys-96, Cys-99, and Ser-305. Residues 78-294 form the Radical SAM core domain; sequence WAKKHATFMI…AEVANAKGFL (217 aa).

This sequence belongs to the radical SAM superfamily. Lipoyl synthase family. [4Fe-4S] cluster serves as cofactor.

Its subcellular location is the cytoplasm. It catalyses the reaction [[Fe-S] cluster scaffold protein carrying a second [4Fe-4S](2+) cluster] + N(6)-octanoyl-L-lysyl-[protein] + 2 oxidized [2Fe-2S]-[ferredoxin] + 2 S-adenosyl-L-methionine + 4 H(+) = [[Fe-S] cluster scaffold protein] + N(6)-[(R)-dihydrolipoyl]-L-lysyl-[protein] + 4 Fe(3+) + 2 hydrogen sulfide + 2 5'-deoxyadenosine + 2 L-methionine + 2 reduced [2Fe-2S]-[ferredoxin]. The protein operates within protein modification; protein lipoylation via endogenous pathway; protein N(6)-(lipoyl)lysine from octanoyl-[acyl-carrier-protein]: step 2/2. Its function is as follows. Catalyzes the radical-mediated insertion of two sulfur atoms into the C-6 and C-8 positions of the octanoyl moiety bound to the lipoyl domains of lipoate-dependent enzymes, thereby converting the octanoylated domains into lipoylated derivatives. The chain is Lipoyl synthase from Beijerinckia indica subsp. indica (strain ATCC 9039 / DSM 1715 / NCIMB 8712).